An 841-amino-acid polypeptide reads, in one-letter code: DNA mismatch repair protein MutS (841 aa).

G600–S607 serves as a coordination point for ATP.

Belongs to the DNA mismatch repair MutS family.

Its function is as follows. This protein is involved in the repair of mismatches in DNA. It is possible that it carries out the mismatch recognition step. This protein has a weak ATPase activity. The polypeptide is DNA mismatch repair protein MutS (Carboxydothermus hydrogenoformans (strain ATCC BAA-161 / DSM 6008 / Z-2901)).